A 199-amino-acid polypeptide reads, in one-letter code: Streptomycin biosynthesis protein StrG (199 aa).

The protein operates within antibiotic biosynthesis; streptomycin biosynthesis. May be involved in the formation of N-methyl-L-glucosamine. This Streptomyces griseus protein is Streptomycin biosynthesis protein StrG (strG).